The primary structure comprises 243 residues: UPF0758 protein PCC7424_2073 (243 aa).

Residues 112–235 (VEINDPVSAV…HQSLRTVTDL (124 aa)) enclose the MPN domain. Positions 184, 186, and 197 each coordinate Zn(2+). Positions 184 to 197 (HNHPSGNVAPSQED) match the JAMM motif motif.

This sequence belongs to the UPF0758 family.

This is UPF0758 protein PCC7424_2073 from Gloeothece citriformis (strain PCC 7424) (Cyanothece sp. (strain PCC 7424)).